The primary structure comprises 744 residues: MQTYLSTKSIEYYLKELKEIFSQIWLKPSEIEKRCEELFKRSKEFDYKRILVSGETDNTTLYVIEDSSKIHVFSPNRDLRENPLLMRWHPSWYEIESKEIYYKCFLSCEELYEHLELPTVTLVNLCVIENFPIPRLNLSTGTLSSYLRKEQLAKVELIDMQVGTTINQIIKNLLDSQPDIIGLSVNFGQKKLAFEILDLIYSHIENGDLSSIITVGNVIPSFSPEQFFERYPSLLICDKEGEYTLRDLIKMLKKELKLDEVNGISYVDESGEVKHNVAETVNFKEEVPTPSLDILGEISKFRGALTLETSRGCDYSRCTFCPRDHKLRSWRPLSVEQTLKQLDDILRAGKHFNIKPHIYMADEEFIGELPNGTEAQRIIDICEGLLKREEKIKFDFAARADSVYEPKRTKEWNVERLKMWHYCALAGADRIFIGVESGSNQQLKRYGKGTTSEQNIIALRLVSALGINLRIGFIMFDQLMKGLDNLKENLDFLERTDALMKPIDIGDMTYEELYDKLLNDKEFIEKHKTGKPVYTIVSYMLASMEILMNTPYSRMVQLTERKEEVNLIMNDGKPDMNMGRYATSFVDKTNGNLSEACQMWIDSNFGVMYTIKSLHKVANPREKKKLYSYMETHREISHFLLKYLVYNLSPDKESQIILSDFLRMHSMEHILDNSKINVGDGSKENILNVMTNWQLIMEKLLRDVEADLNKGIITDSEDHRLHNTLKRWFSDMGNWSLINAYELN.

In terms of domain architecture, B12-binding spans 119-259 (TVTLVNLCVI…KMLKKELKLD (141 aa)). Positions 135, 139, 184, 241, 242, and 308 each coordinate cob(II)alamin. One can recognise a Radical SAM core domain in the interval 299 to 545 (SKFRGALTLE…IVSYMLASME (247 aa)). Residues cysteine 313, cysteine 318, and cysteine 321 each contribute to the [4Fe-4S] cluster site. Cob(II)alamin-binding residues include proline 322, histidine 325, lysine 326, alanine 361, and glutamate 363. The S-adenosyl-L-methionine site is built by glutamate 436 and glutamate 545.

The protein belongs to the radical SAM superfamily. It depends on [4Fe-4S] cluster as a cofactor. Cob(II)alamin is required as a cofactor.

It carries out the reaction dAMP + S-adenosyl-L-methionine = 4'-phospho-dehydrooxetanocin + 5'-deoxyadenosine + L-methionine + H(+). The enzyme catalyses AH2 + 2 S-adenosyl-L-methionine = 2 5'-deoxyadenosin-5'-yl radical + 2 L-methionine + A + 2 H(+). The catalysed reaction is 2 5'-deoxyadenosin-5'-yl radical + 2 dAMP + A = 2 4'-phospho-dehydrooxetanocin + 2 5'-deoxyadenosine + AH2. Its activity is regulated as follows. Requires OxsA for the oxidative ring contraction activity. Activation of OxsB requires its direct interaction with OxsA and is independent of OxsA phosphohydrolase activity. In contrast to ring contraction, methylation does not require the presence of OxsA. In terms of biological role, isomerase involved in the biosynthesis of oxetanocin A (OXT-A), a nucleoside analog with antitumor, antiviral and antibacterial properties. Catalyzes an oxidative ring contraction of dAMP, forming an oxetane aldehyde. In addition, shows methyltransferase activity in vitro and is able to catalyze the radical mediated, stereoselective C2'-methylation of dAMP to form methylated 2'-dAMP. Also catalyzes the demethylation of S-adenosyl-L-methionine (SAM) to S-adenosyl-L-homocysteine (SAH). The protein is 4'-phospho-dehydrooxetanocin synthase of Priestia megaterium (Bacillus megaterium).